Reading from the N-terminus, the 400-residue chain is MTQFASPVLHSLLDTDAYKLHMQQAVFHHYYDVQVAAEFRCRGDDLLGIYADAIREQVDAMQHLRLQEDEFQWLSGLPFFKPDYLNWLREFRYNPAQVCVTNDNGKLNIRLTGPWREVIMWEVPLLAVISELVHHYRSPNAGVDQALDALESKLVDFTALTANLDMSRFHLMDFGTRRRFSREVQQAIVKRLQQESWFVGTSNYDLARRLALTPMGTQAHEWFQAHQQISPDLATSQRAALAAWLNEYPDQLGIALTDCITMDAFLRDFGIEFASRYQGLRHDSGDPVAWGEKAIAHYEKLGIDPLTKTLVFSDNLDLQKAVELYRHFASRVQLSFGIGTRLTCDIPQVKPLNIVIKLVECNGKPVAKLSDSPGKTICHDKAFVRALRKAFDLPQVRKAS.

Residue His-220 is modified to Phosphohistidine; by autocatalysis.

It belongs to the NAPRTase family. In terms of processing, transiently phosphorylated on a His residue during the reaction cycle. Phosphorylation strongly increases the affinity for substrates and increases the rate of nicotinate D-ribonucleotide production. Dephosphorylation regenerates the low-affinity form of the enzyme, leading to product release.

The catalysed reaction is nicotinate + 5-phospho-alpha-D-ribose 1-diphosphate + ATP + H2O = nicotinate beta-D-ribonucleotide + ADP + phosphate + diphosphate. It participates in cofactor biosynthesis; NAD(+) biosynthesis; nicotinate D-ribonucleotide from nicotinate: step 1/1. Its function is as follows. Catalyzes the synthesis of beta-nicotinate D-ribonucleotide from nicotinate and 5-phospho-D-ribose 1-phosphate at the expense of ATP. This Salmonella newport (strain SL254) protein is Nicotinate phosphoribosyltransferase.